Consider the following 593-residue polypeptide: Proline--tRNA ligase (593 aa).

It belongs to the class-II aminoacyl-tRNA synthetase family. ProS type 1 subfamily. In terms of assembly, homodimer.

It is found in the cytoplasm. It carries out the reaction tRNA(Pro) + L-proline + ATP = L-prolyl-tRNA(Pro) + AMP + diphosphate. In terms of biological role, catalyzes the attachment of proline to tRNA(Pro) in a two-step reaction: proline is first activated by ATP to form Pro-AMP and then transferred to the acceptor end of tRNA(Pro). As ProRS can inadvertently accommodate and process non-cognate amino acids such as alanine and cysteine, to avoid such errors it has two additional distinct editing activities against alanine. One activity is designated as 'pretransfer' editing and involves the tRNA(Pro)-independent hydrolysis of activated Ala-AMP. The other activity is designated 'posttransfer' editing and involves deacylation of mischarged Ala-tRNA(Pro). The misacylated Cys-tRNA(Pro) is not edited by ProRS. This Parasynechococcus marenigrum (strain WH8102) protein is Proline--tRNA ligase.